The chain runs to 846 residues: Auxin response factor 2A (846 aa).

Residues 1-12 (MAASEVSIQGYS) show a composition bias toward polar residues. The segment at 1–30 (MAASEVSIQGYSEPSDGSRPVSETGRSSSG) is disordered. A DNA-binding region (TF-B3) is located at residues 146–248 (FCKTLTASDT…ELRVGVRRAM (103 aa)). 2 disordered regions span residues 380 to 423 (PPAL…HSQA) and 660 to 693 (DMNI…GVAA). 2 stretches are compositionally biased toward polar residues: residues 398 to 408 (ILPTSPDSSVL) and 414 to 423 (SRATADHSQA). Residues 675–693 (SDQRSEQSKGSKVDDGVAA) show a composition bias toward basic and acidic residues. One can recognise a PB1 domain in the interval 720–804 (RSCTKVHKQG…RKIFIYTKEE (85 aa)). Polar residues-rich tracts occupy residues 809-824 (NPGT…SSVA) and 836-846 (QLPSESGQAES). A disordered region spans residues 809-846 (NPGTLNSKGEDTSSVAEGSDAKEVKNLQLPSESGQAES).

The protein belongs to the ARF family. As to quaternary structure, homodimers and heterodimers. Interacts with ASR1. Expressed in root, leaf and flower. Expressed in flower buds about three days before opening including ovary, petal and sepal with the highest in stamen. Expressed in stem. Expressed in fruit. Expressed in seeds.

It localises to the nucleus. Auxin response factors (ARFs) are transcriptional factors that bind specifically to the DNA sequence 5'-TGTCTC-3' found in the auxin-responsive promoter elements (AuxREs). Could act as transcriptional activator or repressor. Involved in the control of fruit ripening process. Regulates expression of a number of ripening regulators, transcription factors, and ethylene biosynthesis and signaling components. May act as a transcriptional repressor of auxin-responsive genes. Regulates vegetative growth, lateral root formation and flower organ senescence, possibly partially by regulating gene expression of auxin and ethylene response factor (ERF) genes. Plays a negative role in axillary shoot meristem formation. The sequence is that of Auxin response factor 2A from Solanum lycopersicum (Tomato).